The sequence spans 235 residues: Glucosamine-6-phosphate deaminase (235 aa).

Catalysis depends on D62, which acts as the Proton acceptor; for enolization step. Catalysis depends on N128, which acts as the For ring-opening step. The Proton acceptor; for ring-opening step role is filled by H130. E135 functions as the For ring-opening step in the catalytic mechanism.

The protein belongs to the glucosamine/galactosamine-6-phosphate isomerase family. NagB subfamily.

It catalyses the reaction alpha-D-glucosamine 6-phosphate + H2O = beta-D-fructose 6-phosphate + NH4(+). Its pathway is amino-sugar metabolism; N-acetylneuraminate degradation; D-fructose 6-phosphate from N-acetylneuraminate: step 5/5. In terms of biological role, catalyzes the reversible isomerization-deamination of glucosamine 6-phosphate (GlcN6P) to form fructose 6-phosphate (Fru6P) and ammonium ion. The chain is Glucosamine-6-phosphate deaminase from Latilactobacillus sakei subsp. sakei (strain 23K) (Lactobacillus sakei subsp. sakei).